The chain runs to 1133 residues: RNA-dependent RNA polymerase 2 (1133 aa).

D830, D832, and D834 together coordinate Mg(2+).

The protein belongs to the RdRP family. In terms of assembly, interacts with NRPD1 and SHH1. Associates with Pol IV complex, forming an interpolymerase channel bridging their active sites, through which the Pol IV-generated transcript is handed over to the RDR2 active site after being backtracked, where it is used as the template for double-stranded RNA (dsRNA) synthesis. Interacts with JMJ24.

It is found in the nucleus. The protein resides in the nucleoplasm. Its subcellular location is the nucleolus. The catalysed reaction is RNA(n) + a ribonucleoside 5'-triphosphate = RNA(n+1) + diphosphate. Its function is as follows. RNA-dependent direct polymerase involved in the production of small interfering RNAs (siRNAs). Binds to single-stranded RNA (ssRNA); engages ssRNAs longer than 7 nucleotides and initiates internal to their 3' ends. Able to transcribe the RNA of an RNA/DNA hybrid, the transcript produced by Pol IV, if its 3' end is accessible, to generate double-stranded small interfering RNAs (dsRNAs) precursor essential for establishing and maintaining DNA methylation. Required for the biogenesis of endogenous siRNAs of 24 nucleotide which derive from heterochromatin and DNA repeats such as transposons or endogenous gene tandem repeats, such as repeats present in FWA gene. Involved in transcriptional gene silencing (TGS). Component of the RNA-directed DNA methylation (RdDM) silencing pathway that utilizes siRNAs to guide DNA methyltransferases to asymmetric cytosines. Involved in control of flowering time through RdDM of FWA locus. Required for reception of long-distance mRNA silencing in the shoot. Required for the formation of telomeric siRNAs and the RNA-dependent DNA methylation of asymmetric cytosines in telomeric (5'-CCCTAAA-3') repeats. This chain is RNA-dependent RNA polymerase 2, found in Arabidopsis thaliana (Mouse-ear cress).